Reading from the N-terminus, the 868-residue chain is Translation initiation factor IF-2 (868 aa).

Disordered regions lie at residues 158–178 (VKEE…DELT) and 200–269 (KKEE…KYRE). Positions 200–209 (KKEEVKPEKV) are enriched in basic and acidic residues. Over residues 249-260 (RGGRSKFKKKKG) the composition is skewed to basic residues. Residues 368–537 (GRAPVVTIMG…LLQSEVLELK (170 aa)) enclose the tr-type G domain. Residues 377-384 (GHVDHGKT) form a G1 region. 377 to 384 (GHVDHGKT) contributes to the GTP binding site. Residues 402-406 (GITQH) form a G2 region. The G3 stretch occupies residues 423–426 (DTPG). Residues 423 to 427 (DTPGH) and 477 to 480 (NKMD) contribute to the GTP site. The segment at 477–480 (NKMD) is G4. Residues 513–515 (SAK) are G5.

The protein belongs to the TRAFAC class translation factor GTPase superfamily. Classic translation factor GTPase family. IF-2 subfamily.

Its subcellular location is the cytoplasm. Functionally, one of the essential components for the initiation of protein synthesis. Protects formylmethionyl-tRNA from spontaneous hydrolysis and promotes its binding to the 30S ribosomal subunits. Also involved in the hydrolysis of GTP during the formation of the 70S ribosomal complex. The protein is Translation initiation factor IF-2 of Legionella pneumophila (strain Lens).